We begin with the raw amino-acid sequence, 543 residues long: Ipecac alkaloid beta-glucosidase 2 (543 aa).

A beta-D-glucoside is bound by residues Q36, H140, 185-186 (NE), Y350, E422, W471, and F487. Residue E186 is the Proton donor of the active site. The active-site Nucleophile is the E422.

This sequence belongs to the glycosyl hydrolase 1 family.

The protein localises to the cytoplasm. The protein resides in the cytosol. It carries out the reaction deacetylipecoside + H2O = deacetylipecoside aglycone + D-glucose. It catalyses the reaction deacetylisoipecoside + H2O = deacetylisoipecoside aglycone + D-glucose. Its pathway is alkaloid biosynthesis. Beta-glucosidase catalyzing deglucosylation on N-deacetylisoipecoside and N-deacetylipecoside. The sequence is that of Ipecac alkaloid beta-glucosidase 2 from Carapichea ipecacuanha (Ipecac).